A 383-amino-acid polypeptide reads, in one-letter code: 3-dehydroquinate synthase (383 aa).

Residues 81-86 (EGEVSK), 115-119 (GVVGD), 139-140 (TS), K152, and K161 contribute to the NAD(+) site. Residues E194, H256, and H274 each coordinate Zn(2+).

Belongs to the sugar phosphate cyclases superfamily. Dehydroquinate synthase family. It depends on Co(2+) as a cofactor. Requires Zn(2+) as cofactor. NAD(+) is required as a cofactor.

Its subcellular location is the cytoplasm. The enzyme catalyses 7-phospho-2-dehydro-3-deoxy-D-arabino-heptonate = 3-dehydroquinate + phosphate. It participates in metabolic intermediate biosynthesis; chorismate biosynthesis; chorismate from D-erythrose 4-phosphate and phosphoenolpyruvate: step 2/7. Functionally, catalyzes the conversion of 3-deoxy-D-arabino-heptulosonate 7-phosphate (DAHP) to dehydroquinate (DHQ). The protein is 3-dehydroquinate synthase of Nitrobacter winogradskyi (strain ATCC 25391 / DSM 10237 / CIP 104748 / NCIMB 11846 / Nb-255).